The following is a 705-amino-acid chain: Polyribonucleotide nucleotidyltransferase (705 aa).

Positions 485 and 491 each coordinate Mg(2+). Residues Pro-552 to Ile-611 enclose the KH domain. Residues Gly-621 to Lys-689 form the S1 motif domain.

It belongs to the polyribonucleotide nucleotidyltransferase family. Requires Mg(2+) as cofactor.

The protein resides in the cytoplasm. It carries out the reaction RNA(n+1) + phosphate = RNA(n) + a ribonucleoside 5'-diphosphate. Involved in mRNA degradation. Catalyzes the phosphorolysis of single-stranded polyribonucleotides processively in the 3'- to 5'-direction. The sequence is that of Polyribonucleotide nucleotidyltransferase from Clostridium novyi (strain NT).